We begin with the raw amino-acid sequence, 164 residues long: Transcription factor E (164 aa).

The HTH TFE/IIEalpha-type domain maps to 5–87 (NDKVIRGYLR…LWHLDFSDIE (83 aa)).

This sequence belongs to the TFE family. Monomer. Interaction with RNA polymerase subunits RpoF and RpoE is necessary for Tfe stimulatory transcription activity. Able to interact with Tbp and RNA polymerase in the absence of DNA promoter. Interacts both with the preinitiation and elongation complexes.

In terms of biological role, transcription factor that plays a role in the activation of archaeal genes transcribed by RNA polymerase. Facilitates transcription initiation by enhancing TATA-box recognition by TATA-box-binding protein (Tbp), and transcription factor B (Tfb) and RNA polymerase recruitment. Not absolutely required for transcription in vitro, but particularly important in cases where Tbp or Tfb function is not optimal. It dynamically alters the nucleic acid-binding properties of RNA polymerases by stabilizing the initiation complex and destabilizing elongation complexes. Seems to translocate with the RNA polymerase following initiation and acts by binding to the non template strand of the transcription bubble in elongation complexes. The sequence is that of Transcription factor E from Methanosarcina mazei (strain ATCC BAA-159 / DSM 3647 / Goe1 / Go1 / JCM 11833 / OCM 88) (Methanosarcina frisia).